Here is a 148-residue protein sequence, read N- to C-terminus: 3-dehydroquinate dehydratase (148 aa).

The active-site Proton acceptor is the Tyr23. Substrate is bound by residues Asn74, His80, and Asp87. The Proton donor role is filled by His100. Substrate contacts are provided by residues 101–102 (IS) and Arg111.

It belongs to the type-II 3-dehydroquinase family. As to quaternary structure, homododecamer.

The enzyme catalyses 3-dehydroquinate = 3-dehydroshikimate + H2O. It participates in metabolic intermediate biosynthesis; chorismate biosynthesis; chorismate from D-erythrose 4-phosphate and phosphoenolpyruvate: step 3/7. In terms of biological role, catalyzes a trans-dehydration via an enolate intermediate. This Anoxybacillus flavithermus (strain DSM 21510 / WK1) protein is 3-dehydroquinate dehydratase.